Reading from the N-terminus, the 197-residue chain is Probable nicotinate-nucleotide adenylyltransferase (197 aa).

It belongs to the NadD family.

The catalysed reaction is nicotinate beta-D-ribonucleotide + ATP + H(+) = deamido-NAD(+) + diphosphate. Its pathway is cofactor biosynthesis; NAD(+) biosynthesis; deamido-NAD(+) from nicotinate D-ribonucleotide: step 1/1. Catalyzes the reversible adenylation of nicotinate mononucleotide (NaMN) to nicotinic acid adenine dinucleotide (NaAD). This Bordetella pertussis (strain Tohama I / ATCC BAA-589 / NCTC 13251) protein is Probable nicotinate-nucleotide adenylyltransferase.